We begin with the raw amino-acid sequence, 194 residues long: Acireductone dioxygenase 1 (194 aa).

Residues 1-21 (MEAWYMDDSADDQRKPHHRSP) form a disordered region. Fe(2+)-binding residues include His87, His89, Glu93, and His132. Ni(2+) is bound by residues His87, His89, Glu93, and His132.

The protein belongs to the acireductone dioxygenase (ARD) family. The cofactor is Fe(2+). Requires Ni(2+) as cofactor.

It localises to the cytoplasm. It is found in the nucleus. It catalyses the reaction 1,2-dihydroxy-5-(methylsulfanyl)pent-1-en-3-one + O2 = 4-methylsulfanyl-2-oxobutanoate + formate + 2 H(+). It carries out the reaction 1,2-dihydroxy-5-(methylsulfanyl)pent-1-en-3-one + O2 = 3-(methylsulfanyl)propanoate + CO + formate + 2 H(+). Its pathway is amino-acid biosynthesis; L-methionine biosynthesis via salvage pathway; L-methionine from S-methyl-5-thio-alpha-D-ribose 1-phosphate: step 5/6. In terms of biological role, catalyzes 2 different reactions between oxygen and the acireductone 1,2-dihydroxy-3-keto-5-methylthiopentene (DHK-MTPene) depending upon the metal bound in the active site. Fe-containing acireductone dioxygenase (Fe-ARD) produces formate and 2-keto-4-methylthiobutyrate (KMTB), the alpha-ketoacid precursor of methionine in the methionine recycle pathway. Ni-containing acireductone dioxygenase (Ni-ARD) produces methylthiopropionate, carbon monoxide and formate, and does not lie on the methionine recycle pathway. This chain is Acireductone dioxygenase 1, found in Physcomitrium patens (Spreading-leaved earth moss).